Here is a 151-residue protein sequence, read N- to C-terminus: MLKGFKEFLSRGNIVDLAVAVVIGTAFTALVTRFTDSIITPLINRVGVNEQSDLGILKIGIGRGQSIDLNVLLSATINFILVAGVVYFLVVVPYNTLRKKGEVEQADDAQIVLLTEIRDLLAQTNSNSSGRHEAPGTAGTPPPNYGPRADT.

2 helical membrane passes run 12 to 32 (GNIVDLAVAVVIGTAFTALVT) and 71 to 91 (VLLSATINFILVAGVVYFLVV). The disordered stretch occupies residues 125 to 151 (NSNSSGRHEAPGTAGTPPPNYGPRADT).

The protein belongs to the MscL family. As to quaternary structure, homopentamer.

The protein resides in the cell membrane. Channel that opens in response to stretch forces in the membrane lipid bilayer. May participate in the regulation of osmotic pressure changes within the cell. The protein is Large-conductance mechanosensitive channel of Mycobacterium ulcerans (strain Agy99).